The sequence spans 244 residues: ATP synthase subunit O, mitochondrial (244 aa).

The N-terminal 45 residues, 1-45, are a transit peptide targeting the mitochondrion; that stretch reads MAMTGRARSMGFSILQKALSSAQRSNAHRSILCPTLSNSELLRNY.

Belongs to the ATPase delta chain family. As to quaternary structure, F-type ATPases have 2 components, CF(1) - the catalytic core - and CF(0) - the membrane proton channel. CF(1) has five subunits: alpha(3), beta(3), gamma(1), delta(1), epsilon(1). CF(0) has three main subunits: a, b and c.

It localises to the mitochondrion. Its subcellular location is the mitochondrion inner membrane. Its function is as follows. Mitochondrial membrane ATP synthase (F(1)F(0) ATP synthase or Complex V) produces ATP from ADP in the presence of a proton gradient across the membrane which is generated by electron transport complexes of the respiratory chain. F-type ATPases consist of two structural domains, F(1) - containing the extramembraneous catalytic core and F(0) - containing the membrane proton channel, linked together by a central stalk and a peripheral stalk. During catalysis, ATP synthesis in the catalytic domain of F(1) is coupled via a rotary mechanism of the central stalk subunits to proton translocation. Part of the complex F(0) domain and the peripheric stalk, which acts as a stator to hold the catalytic alpha(3)beta(3) subcomplex and subunit a/ATP6 static relative to the rotary elements. This chain is ATP synthase subunit O, mitochondrial, found in Ipomoea batatas (Sweet potato).